We begin with the raw amino-acid sequence, 24 residues long: Lectin (24 aa).

The protein belongs to the leguminous lectin family. Homotetramer.

In terms of biological role, agglutinates erythrocytes of blood group A. Binds in decreasing order of affinity: N-acetyl-D-galactosamine, D-galactose, and D-galactosamine. This is Lectin from Crotalaria pallida (Smooth rattlebox).